The sequence spans 387 residues: Protein-glutamate methylesterase/protein-glutamine glutaminase 1 (387 aa).

In terms of domain architecture, Response regulatory spans 18–136; that stretch reads RVMVVDDSAV…EISGGTDFRH (119 aa). Aspartate 69 is modified (4-aspartylphosphate). The 198-residue stretch at 190–387 folds into the CheB-type methylesterase domain; sequence PAAEERPDII…AYVLRSANKR (198 aa). Active-site residues include serine 204, histidine 233, and aspartate 329.

This sequence belongs to the CheB family. Phosphorylated by CheA. Phosphorylation of the N-terminal regulatory domain activates the methylesterase activity.

The protein localises to the cytoplasm. It catalyses the reaction [protein]-L-glutamate 5-O-methyl ester + H2O = L-glutamyl-[protein] + methanol + H(+). The enzyme catalyses L-glutaminyl-[protein] + H2O = L-glutamyl-[protein] + NH4(+). Functionally, involved in chemotaxis. Part of a chemotaxis signal transduction system that modulates chemotaxis in response to various stimuli. Catalyzes the demethylation of specific methylglutamate residues introduced into the chemoreceptors (methyl-accepting chemotaxis proteins or MCP) by CheR. Also mediates the irreversible deamidation of specific glutamine residues to glutamic acid. This is Protein-glutamate methylesterase/protein-glutamine glutaminase 1 from Rhodospirillum rubrum (strain ATCC 11170 / ATH 1.1.1 / DSM 467 / LMG 4362 / NCIMB 8255 / S1).